We begin with the raw amino-acid sequence, 523 residues long: Cytochrome b5 reductase 4 (523 aa).

Residues 54-130 form the Cytochrome b5 heme-binding domain; that stretch reads LIDVTEEELA…LKECLIGRMA (77 aa). The heme site is built by histidine 89 and histidine 112. The CS domain maps to 167-258; that stretch reads ESHPWYDWFQ…KEPVSWKSLG (92 aa). The region spanning 275–387 is the FAD-binding FR-type domain; the sequence is LYYRKCRLAS…SNPQGTFSSF (113 aa). Residues 367-382 and 394-426 each bind FAD; these read ENLT…NPQG and DVFL…KAKL.

It belongs to the flavoprotein pyridine nucleotide cytochrome reductase family. FAD serves as cofactor.

It is found in the endoplasmic reticulum. It carries out the reaction 2 Fe(III)-[cytochrome b5] + NADH = 2 Fe(II)-[cytochrome b5] + NAD(+) + H(+). In terms of biological role, NADH-cytochrome b5 reductase involved in endoplasmic reticulum stress response pathway. This chain is Cytochrome b5 reductase 4 (cyb5r4), found in Xenopus tropicalis (Western clawed frog).